Here is a 333-residue protein sequence, read N- to C-terminus: MTTPQPSQVRVAVTQAEPVWLDLKATVDKTCSLIAEAASKGAQLVSFPECWIPGYPAWIWTRPVDQELHSRYIQNSLTVSSPEMTQICKSANENNVIVVLGFSENIHNSLYISQAIISNTGSILTTRKKIKATHMERTIFGDAFADCLDSVVETAVGRVGALSCWEHIQPLLKYHTCAQREAIHVAAWPPLFEWGGPEDESLFSMSRDGTIALARTYAIESSSFVLHTTAVISQEGVEKMRTATGAIMNMPGGGSSAIFGPDGRLLSKPLLPTEEGIIYADLEMHDIYKTKAFVDVLGHYSRPDLLWLGVGSCDRRHVKEDAEERREDRVEVL.

One can recognise a CN hydrolase domain in the interval 9 to 284; sequence VRVAVTQAEP…EGIIYADLEM (276 aa). E49 serves as the catalytic Proton acceptor. Residue K129 is part of the active site. The active-site Nucleophile is C164.

The protein belongs to the carbon-nitrogen hydrolase superfamily. Nitrilase family.

The enzyme catalyses a nitrile + 2 H2O = a carboxylate + NH4(+). It catalyses the reaction 4-chlorophenylacetonitrile + 2 H2O = 4-chlorophenylacetate + NH4(+). Its function is as follows. Nitrilase that hydrolyzes preferentially phenylacetonitrile, (R,S)-mandelonitrile, and 3-indolylacetonitrile. This Aspergillus oryzae (strain ATCC 42149 / RIB 40) (Yellow koji mold) protein is Arylacetonitrilase.